We begin with the raw amino-acid sequence, 103 residues long: Ghrelin (103 aa).

The signal sequence occupies residues 1 to 26 (MPLRRRASHMFVLLCALSLCVESVKG). The interval 27-51 (GTSFLSPAQKPQGRRPPRMGRRDVA) is disordered. Ser29 is lipidated: O-decanoyl serine; alternate. Ser29 carries the O-hexanoyl serine; alternate lipid modification. The O-octanoyl serine; alternate moiety is linked to residue Ser29. Gln38 is subject to Glutamine amide. Met45 bears the Methionine amide mark. The propeptide at 49–103 (DVAEPEIPVIKEDDQFMMSAPFELSVSLSEAEYEKYGPVLQKVLVNLLGDSPLEF) is removed in mature form.

It belongs to the motilin family. Post-translationally, O-octanoylated by GOAT/MBOAT4. O-octanoylation or O-decanoylation is essential for activity. The O-decanoylated form differs in the length of the carbon backbone of the carboxylic acid forming an ester bond with Ser-29. Expressed in the telencephalon, hypothalamus, pituitary, intestine, liver, spleen and gill, with expression strongest in the intestine.

The protein localises to the secreted. In terms of biological role, ligand for growth hormone secretagogue receptor type 1 (GHSR). Induces the release of growth hormone from the pituitary. Induces adiposity and stimulates gastric acid secretion. Involved in growth regulation. Has an appetite-stimulating effect. The polypeptide is Ghrelin (ghrl) (Carassius auratus (Goldfish)).